We begin with the raw amino-acid sequence, 875 residues long: Valine--tRNA ligase (875 aa).

The 'HIGH' region signature appears at 45–55 (PNVTGVLHMGH). Residues 524–528 (KMSKS) carry the 'KMSKS' region motif. K527 contacts ATP. The stretch at 803–837 (VKLLIDKTKELIRLEKQLEKYKMLKISVSKKLENE) forms a coiled coil.

Belongs to the class-I aminoacyl-tRNA synthetase family. ValS type 1 subfamily. As to quaternary structure, monomer.

It localises to the cytoplasm. The enzyme catalyses tRNA(Val) + L-valine + ATP = L-valyl-tRNA(Val) + AMP + diphosphate. Catalyzes the attachment of valine to tRNA(Val). As ValRS can inadvertently accommodate and process structurally similar amino acids such as threonine, to avoid such errors, it has a 'posttransfer' editing activity that hydrolyzes mischarged Thr-tRNA(Val) in a tRNA-dependent manner. This is Valine--tRNA ligase from Borrelia garinii subsp. bavariensis (strain ATCC BAA-2496 / DSM 23469 / PBi) (Borreliella bavariensis).